A 505-amino-acid chain; its full sequence is Lysine--tRNA ligase (505 aa).

2 residues coordinate Mg(2+): Glu-415 and Glu-422.

It belongs to the class-II aminoacyl-tRNA synthetase family. Homodimer. Mg(2+) serves as cofactor.

Its subcellular location is the cytoplasm. The catalysed reaction is tRNA(Lys) + L-lysine + ATP = L-lysyl-tRNA(Lys) + AMP + diphosphate. In Escherichia coli O157:H7, this protein is Lysine--tRNA ligase.